The sequence spans 159 residues: Type IV major alpha-pilin (159 aa).

Residues 1–6 (MNAQKG) constitute a propeptide, leader sequence. Phe7 carries the N-methylphenylalanine modification. The chain crosses the membrane as a helical span at residues 7-27 (FTLIELMIVIAIIGILAAIAL). The interval 64-87 (VLSEESSTSKENIGLTSSETSTKP) is disordered. Polar residues predominate over residues 67 to 87 (EESSTSKENIGLTSSETSTKP). Residues Cys137 and Cys156 are joined by a disulfide bond.

This sequence belongs to the N-Me-Phe pilin family. As to quaternary structure, major component of the type IV pilus (T4P) that plays a role in surface and attachment to the host epithelial tissues.

It localises to the fimbrium. Its subcellular location is the membrane. The chain is Type IV major alpha-pilin (tfpI) from Moraxella bovis.